The sequence spans 590 residues: Aspartate--tRNA(Asp/Asn) ligase (590 aa).

Glu170 is an L-aspartate binding site. The segment at 194-197 (QLFK) is aspartate. Position 216 (Arg216) interacts with L-aspartate. Residues 216 to 218 (RDE) and Gln225 each bind ATP. His448 provides a ligand contact to L-aspartate. Glu482 lines the ATP pocket. Arg489 is a binding site for L-aspartate. 534 to 537 (GWDR) is a binding site for ATP. Residues 557-590 (SGGGADPLTGAPAPITPQQRRESGIDAKPKKDGE) form a disordered region. Over residues 575 to 590 (QRRESGIDAKPKKDGE) the composition is skewed to basic and acidic residues.

This sequence belongs to the class-II aminoacyl-tRNA synthetase family. Type 1 subfamily. As to quaternary structure, homodimer.

It is found in the cytoplasm. The enzyme catalyses tRNA(Asx) + L-aspartate + ATP = L-aspartyl-tRNA(Asx) + AMP + diphosphate. Functionally, aspartyl-tRNA synthetase with relaxed tRNA specificity since it is able to aspartylate not only its cognate tRNA(Asp) but also tRNA(Asn). Reaction proceeds in two steps: L-aspartate is first activated by ATP to form Asp-AMP and then transferred to the acceptor end of tRNA(Asp/Asn). The sequence is that of Aspartate--tRNA(Asp/Asn) ligase from Mycobacterium sp. (strain KMS).